A 178-amino-acid polypeptide reads, in one-letter code: ATP-dependent protease subunit HslV (178 aa).

Threonine 7 is a catalytic residue. Residues glycine 162, cysteine 165, and threonine 168 each contribute to the Na(+) site.

It belongs to the peptidase T1B family. HslV subfamily. A double ring-shaped homohexamer of HslV is capped on each side by a ring-shaped HslU homohexamer. The assembly of the HslU/HslV complex is dependent on binding of ATP.

It is found in the cytoplasm. It carries out the reaction ATP-dependent cleavage of peptide bonds with broad specificity.. Its activity is regulated as follows. Allosterically activated by HslU binding. Protease subunit of a proteasome-like degradation complex believed to be a general protein degrading machinery. The polypeptide is ATP-dependent protease subunit HslV (Burkholderia mallei (strain ATCC 23344)).